Consider the following 392-residue polypeptide: uncharacterized protein (392 aa).

Helical transmembrane passes span 2 to 23 (WLAN…SLYI), 38 to 60 (SGYV…GRFG), 73 to 95 (GTGI…LFFL), 153 to 175 (FTYT…LFGV), 195 to 217 (VLSY…LIQT), 237 to 259 (VNLA…LLAR), 272 to 291 (RILI…QALA), 297 to 319 (LLVF…TAAI), 331 to 353 (VLGY…GGII), and 357 to 379 (FTIS…MLWI).

It belongs to the major facilitator superfamily.

It localises to the cell membrane. This is an uncharacterized protein from Bacillus subtilis (strain 168).